Reading from the N-terminus, the 383-residue chain is Phospho-N-acetylmuramoyl-pentapeptide-transferase (383 aa).

9 consecutive transmembrane segments (helical) span residues 26 to 46 (TAGA…GVIE), 73 to 93 (TMGG…WAEL), 98 to 118 (IILL…DDFL), 131 to 151 (IYKI…LYYF), 182 to 202 (IFLP…IPFA), 221 to 241 (GLAI…SYVS), 258 to 278 (AGEV…FLWF), 283 to 305 (AQVF…IALF), and 360 to 380 (QVVF…IATL).

This sequence belongs to the glycosyltransferase 4 family. MraY subfamily. Mg(2+) is required as a cofactor.

The protein resides in the cell inner membrane. The enzyme catalyses UDP-N-acetyl-alpha-D-muramoyl-L-alanyl-gamma-D-glutamyl-meso-2,6-diaminopimeloyl-D-alanyl-D-alanine + di-trans,octa-cis-undecaprenyl phosphate = di-trans,octa-cis-undecaprenyl diphospho-N-acetyl-alpha-D-muramoyl-L-alanyl-D-glutamyl-meso-2,6-diaminopimeloyl-D-alanyl-D-alanine + UMP. Its pathway is cell wall biogenesis; peptidoglycan biosynthesis. Functionally, catalyzes the initial step of the lipid cycle reactions in the biosynthesis of the cell wall peptidoglycan: transfers peptidoglycan precursor phospho-MurNAc-pentapeptide from UDP-MurNAc-pentapeptide onto the lipid carrier undecaprenyl phosphate, yielding undecaprenyl-pyrophosphoryl-MurNAc-pentapeptide, known as lipid I. The sequence is that of Phospho-N-acetylmuramoyl-pentapeptide-transferase from Brachyspira hyodysenteriae (strain ATCC 49526 / WA1).